Consider the following 1414-residue polypeptide: Phenyloxazoline synthase MbtB (1414 aa).

Residues 5–78 enclose the Carrier 1 domain; sequence TACSEIIRAE…AWSQLVSAGT (74 aa). Ser39 carries the post-translational modification O-(pantetheine 4'-phosphoryl)serine. A condensation/cyclization region spans residues 96–394; sequence EGEPFPVAPM…SSLLLDVDLT (299 aa). The segment at 579-975 is adenylation; that stretch reads SYAQLRDQAS…RLPGVHAAAA (397 aa). Positions 1057–1135 constitute a Carrier 2 domain; that stretch reads APRTVLQRAL…ALAQLLTGRE (79 aa). O-(pantetheine 4'-phosphoryl)serine is present on Ser1094. A thioesterase region spans residues 1188 to 1413; that stretch reads GAVLVFPHAG…AVARMVSADV (226 aa).

It belongs to the ATP-dependent AMP-binding enzyme family. MbtB subfamily. The cofactor is pantetheine 4'-phosphate. 4'-phosphopantetheine is transferred from CoA to a specific serine in each of the two carrier protein domains, leading to their activation from apo to holo forms.

Its pathway is siderophore biosynthesis; mycobactin biosynthesis. Its function is as follows. Involved in the initial steps of the mycobactin biosynthetic pathway. Putatively couples activated salicylic acid with serine or threonine and cyclizes this precursor to the hydroxyphenyloxazoline ring system present in this class of siderophores. Essential for growth in macrophages. In Mycobacterium tuberculosis (strain CDC 1551 / Oshkosh), this protein is Phenyloxazoline synthase MbtB (mbtB).